A 278-amino-acid polypeptide reads, in one-letter code: Phosphatidylglycerol--prolipoprotein diacylglyceryl transferase (278 aa).

The next 3 membrane-spanning stretches (helical) occupy residues 13–33, 50–70, and 89–109; these read LFGI…ALAV, VFDF…LYYV, and NGGL…FFFT. Residue Arg135 participates in a 1,2-diacyl-sn-glycero-3-phospho-(1'-sn-glycerol) binding. Transmembrane regions (helical) follow at residues 175–195, 205–225, and 236–256; these read QPTF…LVLL, GEVF…IEGL, and IRVS…IVIV.

This sequence belongs to the Lgt family.

It localises to the cell membrane. The catalysed reaction is L-cysteinyl-[prolipoprotein] + a 1,2-diacyl-sn-glycero-3-phospho-(1'-sn-glycerol) = an S-1,2-diacyl-sn-glyceryl-L-cysteinyl-[prolipoprotein] + sn-glycerol 1-phosphate + H(+). Its pathway is protein modification; lipoprotein biosynthesis (diacylglyceryl transfer). Functionally, catalyzes the transfer of the diacylglyceryl group from phosphatidylglycerol to the sulfhydryl group of the N-terminal cysteine of a prolipoprotein, the first step in the formation of mature lipoproteins. The sequence is that of Phosphatidylglycerol--prolipoprotein diacylglyceryl transferase from Enterococcus faecalis (strain ATCC 700802 / V583).